Here is a 481-residue protein sequence, read N- to C-terminus: Coniferyl aldehyde dehydrogenase (481 aa).

Active-site residues include E221 and C255.

Belongs to the aldehyde dehydrogenase family. Homodimer.

It carries out the reaction (E)-coniferaldehyde + NADP(+) + H2O = (E)-ferulate + NADPH + 2 H(+). It catalyses the reaction (E)-coniferaldehyde + NAD(+) + H2O = (E)-ferulate + NADH + 2 H(+). Catalyzes the NAD(+)-dependent oxidation of coniferyl aldehyde to ferulic acid and which is induced during growth with eugenol as the carbon source. This chain is Coniferyl aldehyde dehydrogenase (calB), found in Pseudomonas sp. (strain HR199 / DSM 7063).